We begin with the raw amino-acid sequence, 291 residues long: MAAEEHALTSTEYIKHHLTNLTYGKMPDGTWKLAENAKEAQEMGFSAIHLDSMGWSIGLGIIFCLVFWCAAKAAKADVPSKFQSAIEMIIEFVDSSVRDTFHGKSRLIAPLALTIFVWIFLMNLMDLIPVDWVPMLAQIVGAHVFGMDPHHVYFKIVPSTDPNITLGMSLSVFVLILFYSIREKGIGGFVGELALNPFNPSNPVAKALLIPVNLILELVTFLARPISLALRLFGNMYAGELIFILIALLPFWIQWALSVPWAIFHILVITLQAFIFMMLTIVYLSMASEKH.

The next 5 helical transmembrane spans lie at 48-68 (IHLDSMGWSIGLGIIFCLVFW), 108-128 (IAPLALTIFVWIFLMNLMDLI), 161-181 (DPNITLGMSLSVFVLILFYSI), 241-261 (LIFILIALLPFWIQWALSVPW), and 262-282 (AIFHILVITLQAFIFMMLTIV).

This sequence belongs to the ATPase A chain family. As to quaternary structure, F-type ATPases have 2 components, CF(1) - the catalytic core - and CF(0) - the membrane proton channel. CF(1) has five subunits: alpha(3), beta(3), gamma(1), delta(1), epsilon(1). CF(0) has three main subunits: a(1), b(2) and c(9-12). The alpha and beta chains form an alternating ring which encloses part of the gamma chain. CF(1) is attached to CF(0) by a central stalk formed by the gamma and epsilon chains, while a peripheral stalk is formed by the delta and b chains.

It localises to the cell inner membrane. Key component of the proton channel; it plays a direct role in the translocation of protons across the membrane. This is ATP synthase subunit a from Acinetobacter baylyi (strain ATCC 33305 / BD413 / ADP1).